A 35-amino-acid chain; its full sequence is Alpha-amanitin proprotein 1 (35 aa).

A propeptide spanning residues 1 to 10 is cleaved from the precursor; that stretch reads MFDTNATRLP. At Ile11 the chain carries (3R,4R)-4,5-dihydroxyisoleucine; in form alpha-amanitin. Ile11 carries the post-translational modification (3R,4S)-4-hydroxyisoleucine; in form gamma-amanitin. Residues 11 to 18 constitute a cross-link (cyclopeptide (Ile-Pro)); the sequence is IWGIGCNP. Positions 12–16 form a cross-link, 2'-cysteinyl-6'-hydroxytryptophan sulfoxide (Trp-Cys); that stretch reads WGIGC. 4-hydroxyproline is present on Pro18. The propeptide occupies 19-35; that stretch reads WTAEHVDQTLASGNDIC.

The protein belongs to the MSDIN fungal toxin family. In terms of processing, processed by the macrocyclase-peptidase enzyme POPB to yield a toxic bicyclic octapeptide. POPB first removes 10 residues from the N-terminus. Conformational trapping of the remaining peptide forces the enzyme to release this intermediate rather than proceed to macrocyclization. The enzyme rebinds the remaining peptide in a different conformation and catalyzes macrocyclization of the N-terminal 8 residues.

Functionally, major toxin belonging to the bicyclic octapeptides amatoxins that acts by binding non-competitively to RNA polymerase II and greatly slowing the elongation of transcripts from target promoters. The polypeptide is Alpha-amanitin proprotein 1 (Galerina marginata (strain CBS 339.88)).